Consider the following 187-residue polypeptide: UPF0398 protein LBA1157 (187 aa).

It belongs to the UPF0398 family.

This chain is UPF0398 protein LBA1157, found in Lactobacillus acidophilus (strain ATCC 700396 / NCK56 / N2 / NCFM).